Here is a 161-residue protein sequence, read N- to C-terminus: NADH-quinone oxidoreductase subunit I (161 aa).

2 consecutive 4Fe-4S ferredoxin-type domains span residues Arg-53 to Glu-82 and Thr-92 to Asn-121. [4Fe-4S] cluster is bound by residues Cys-62, Cys-65, Cys-68, Cys-72, Cys-101, Cys-104, Cys-107, and Cys-111.

This sequence belongs to the complex I 23 kDa subunit family. In terms of assembly, NDH-1 is composed of 14 different subunits. Subunits NuoA, H, J, K, L, M, N constitute the membrane sector of the complex. The cofactor is [4Fe-4S] cluster.

Its subcellular location is the cell inner membrane. The catalysed reaction is a quinone + NADH + 5 H(+)(in) = a quinol + NAD(+) + 4 H(+)(out). Functionally, NDH-1 shuttles electrons from NADH, via FMN and iron-sulfur (Fe-S) centers, to quinones in the respiratory chain. The immediate electron acceptor for the enzyme in this species is believed to be ubiquinone. Couples the redox reaction to proton translocation (for every two electrons transferred, four hydrogen ions are translocated across the cytoplasmic membrane), and thus conserves the redox energy in a proton gradient. This is NADH-quinone oxidoreductase subunit I from Hyphomonas neptunium (strain ATCC 15444).